Consider the following 137-residue polypeptide: MVNLGFVIAEFNRDLTFMMEKMAEEHAEFLGANVSHKIMVPGSFDMPLAIKTLLQKDDIDAIVTIGCVIEGDTEHDEIVVQNAARKIADLSLDFGKPVALGIAGPGMTRMQAEDRIDYGKNAVEAAVKMVKRLKEIQ.

5-amino-6-(D-ribitylamino)uracil is bound by residues phenylalanine 11, 43–45 (SFD), and 67–69 (CVI). (2S)-2-hydroxy-3-oxobutyl phosphate is bound at residue 72–73 (DT). Histidine 75 acts as the Proton donor in catalysis. Leucine 100 lines the 5-amino-6-(D-ribitylamino)uracil pocket. Arginine 115 contacts (2S)-2-hydroxy-3-oxobutyl phosphate.

This sequence belongs to the DMRL synthase family. In terms of assembly, forms an icosahedral capsid composed of 60 subunits, arranged as a dodecamer of pentamers.

The catalysed reaction is (2S)-2-hydroxy-3-oxobutyl phosphate + 5-amino-6-(D-ribitylamino)uracil = 6,7-dimethyl-8-(1-D-ribityl)lumazine + phosphate + 2 H2O + H(+). The protein operates within cofactor biosynthesis; riboflavin biosynthesis; riboflavin from 2-hydroxy-3-oxobutyl phosphate and 5-amino-6-(D-ribitylamino)uracil: step 1/2. In terms of biological role, catalyzes the formation of 6,7-dimethyl-8-ribityllumazine by condensation of 5-amino-6-(D-ribitylamino)uracil with 3,4-dihydroxy-2-butanone 4-phosphate. This is the penultimate step in the biosynthesis of riboflavin. The polypeptide is 6,7-dimethyl-8-ribityllumazine synthase (Methanococcus maripaludis (strain DSM 14266 / JCM 13030 / NBRC 101832 / S2 / LL)).